We begin with the raw amino-acid sequence, 81 residues long: Elongation factor 1-beta (81 aa).

It belongs to the EF-1-beta/EF-1-delta family.

Functionally, promotes the exchange of GDP for GTP in EF-1-alpha/GDP, thus allowing the regeneration of EF-1-alpha/GTP that could then be used to form the ternary complex EF-1-alpha/GTP/AAtRNA. This chain is Elongation factor 1-beta, found in Nanoarchaeum equitans (strain Kin4-M).